A 388-amino-acid chain; its full sequence is (S)-8-oxocitronellyl enol synthase (388 aa).

Residues 38–40 (TGI), 66–67 (RR), 84–85 (DV), 108–109 (SW), and glutamine 142 each bind NADP(+). Catalysis depends on residues lysine 146 and tyrosine 178. Substrate contacts are provided by lysine 146 and tyrosine 178. NADP(+) contacts are provided by residues tyrosine 178, valine 204, and 211–213 (SMM). A substrate-binding site is contributed by serine 349.

It belongs to the short-chain dehydrogenases/reductases (SDR) family. Highly divergent. As to quaternary structure, homodimer. In terms of tissue distribution, expressed in internal phloem-associated parenchyma (IPAP) cells.

It localises to the cytoplasm. The protein resides in the cytosol. The catalysed reaction is (S)-8-oxocitronellyl enol + NADP(+) = (6E)-8-oxogeranial + NADPH + H(+). It carries out the reaction (S)-8-oxocitronellyl enol + NAD(+) = (6E)-8-oxogeranial + NADH + H(+). Iridoid synthase that catalyzes the first step in generation of the iridoid ring scaffold using the linear monoterpene (6E)-8-oxogeranial as substrate. Iridoids comprise a large family of distinctive bicyclic monoterpenes that possess a wide range of pharmacological activities, including anticancer, anti-inflammatory, antifungal and antibacterial activities. The polypeptide is (S)-8-oxocitronellyl enol synthase (Catharanthus roseus (Madagascar periwinkle)).